The sequence spans 473 residues: Probable acid phosphatase DDB_G0284755 (473 aa).

His94 (nucleophile) is an active-site residue. The active-site Proton donor is the Asp359.

This sequence belongs to the histidine acid phosphatase family.

It catalyses the reaction a phosphate monoester + H2O = an alcohol + phosphate. The sequence is that of Probable acid phosphatase DDB_G0284755 from Dictyostelium discoideum (Social amoeba).